Reading from the N-terminus, the 183-residue chain is Oleosin-B2 (183 aa).

The interval 1–23 (QASIFSRFFRMFSFIFPFVNVIK) is polar. 3 helical membrane-spanning segments follow: residues 24-44 (LIIA…ALGG), 46-66 (AVAL…LVPA), and 72-92 (LLAS…GLIM). Positions 24 to 95 (LIIASVTSLV…TGIGLIMGLV (72 aa)) are hydrophobic.

This sequence belongs to the oleosin family. The full-length protein is found in the tapetal lipid bodies of immature anthers, the proteolytically cleaved C-terminal product is found on the coats of pollen grains. Not present in seeds.

The protein localises to the lipid droplet. It is found in the membrane. Its function is as follows. Many of the major pollen coat proteins are derived from endoproteolytic cleavage of oleosin-like proteins. This Brassica napus (Rape) protein is Oleosin-B2 (OlnB2).